We begin with the raw amino-acid sequence, 769 residues long: Signal transducer and activator of transcription 3.1 (769 aa).

Positions 150 to 162 (DVRKKVQDLEQKM) match the Essential for nuclear import motif. Residues 580–670 (WNEGYIMGFI…DATNILVSPL (91 aa)) enclose the SH2 domain. Ser-728 carries the post-translational modification Phosphoserine; by NLK.

Belongs to the transcription factor STAT family. In terms of assembly, forms a homodimer or a heterodimer with a related family member, such as stat1. Interacts with nlk.2. In terms of processing, phosphorylation of both tyrosine and serine residues, together with dimerization, is required for mesoderm induction.

It is found in the cytoplasm. The protein localises to the nucleus. Functionally, transcription factor that binds to target promoter sequences and activates transcription upon il6st/gp130 stimulation. Mediates ventralization of embryos, at least in part via inhibition of smad2 signaling. Required for hairy2 to induce dll1/delta1 and promote neural crest cell proliferation and differentiation. Involved in TGFbeta-mediated mesoderm induction in early embryos, acting downstream of map3k7/tak1 and nlk.2. This chain is Signal transducer and activator of transcription 3.1 (stat3.1), found in Xenopus laevis (African clawed frog).